Consider the following 157-residue polypeptide: uncharacterized protein (157 aa).

The signal sequence occupies residues 1 to 26 (MEALRRAHEVALRLLLCRPWASRAAA).

Its subcellular location is the secreted. This is an uncharacterized protein from Homo sapiens (Human).